A 549-amino-acid chain; its full sequence is Efflux pump patC (549 aa).

Positions M1 to L12 are enriched in polar residues. A disordered region spans residues M1 to Q40. The next 14 helical transmembrane spans lie at L50 to V70, A85 to L105, W116 to P136, V146 to L166, L178 to A198, W206 to L226, V252 to W272, L282 to L302, I321 to I341, L360 to K380, V385 to V405, I419 to V439, L460 to L482, and V526 to W546.

Belongs to the major facilitator superfamily. TCR/Tet family.

The protein resides in the vacuole membrane. It is found in the cell membrane. Efflux pump; part of the gene cluster that mediates the biosynthesis of patulin, an acetate-derived tetraketide mycotoxin produced by several fungal species that shows antimicrobial properties against several bacteria. May be involved in the secretion of E-ascladiol to be converted to patulin by the secreted patulin synthase patE. This Aspergillus clavatus (strain ATCC 1007 / CBS 513.65 / DSM 816 / NCTC 3887 / NRRL 1 / QM 1276 / 107) protein is Efflux pump patC.